The chain runs to 241 residues: Ribonuclease 3 (241 aa).

Positions 16–144 constitute an RNase III domain; the sequence is HAEFEKKINY…VIGAIFQDGG (129 aa). Position 57 (Glu57) interacts with Mg(2+). Catalysis depends on residues Asp61 and Glu133. Residue Glu133 coordinates Mg(2+). One can recognise a DRBM domain in the interval 171–240; that stretch reads DAKSRLQEIL…AALAIKKIES (70 aa).

It belongs to the ribonuclease III family. As to quaternary structure, homodimer. Mg(2+) serves as cofactor.

It localises to the cytoplasm. It carries out the reaction Endonucleolytic cleavage to 5'-phosphomonoester.. Digests double-stranded RNA. Involved in the processing of primary rRNA transcript to yield the immediate precursors to the large and small rRNAs (23S and 16S). Processes some mRNAs, and tRNAs when they are encoded in the rRNA operon. Processes pre-crRNA and tracrRNA of type II CRISPR loci if present in the organism. The chain is Ribonuclease 3 from Desulfotalea psychrophila (strain LSv54 / DSM 12343).